We begin with the raw amino-acid sequence, 150 residues long: UPF0178 protein PputGB1_5282 (150 aa).

The protein belongs to the UPF0178 family.

This Pseudomonas putida (strain GB-1) protein is UPF0178 protein PputGB1_5282.